Consider the following 134-residue polypeptide: DNA-binding protein inhibitor ID-2 (134 aa).

2 positions are modified to phosphoserine: Ser14 and Ser25. One can recognise a bHLH domain in the interval 23–75; it reads SRSKTPVDDPMSLLYNMNDCYSKLKELVPSIPQNKKVSKMEILQHVIDYILDL. The Nuclear export signal motif lies at 106–115; the sequence is LNTDISILSL.

As to quaternary structure, interacts with GATA4 and NKX2-5. Interacts with NR0B2. Interacts with CLOCK and BMAL1. Interacts with IFI204. Interacts with NEDD9/HEF1. Interacts with ASB4; this interaction promotes ID2 proteasomal degradation. In terms of processing, ubiquitinated in a ASB4-depedent manner, leading to proteasomal degradation. Post-translationally, phosphorylated in vitro by CDK1, PKA and PKC.

Its subcellular location is the cytoplasm. The protein localises to the nucleus. Functionally, transcriptional regulator (lacking a basic DNA binding domain) which negatively regulates the basic helix-loop-helix (bHLH) transcription factors by forming heterodimers and inhibiting their DNA binding and transcriptional activity. Implicated in regulating a variety of cellular processes, including cellular growth, senescence, differentiation, apoptosis, angiogenesis, and neoplastic transformation. Inhibits skeletal muscle and cardiac myocyte differentiation. Regulates the circadian clock by repressing the transcriptional activator activity of the CLOCK-BMAL1 heterodimer. Restricts the CLOCK and BMAL1 localization to the cytoplasm. Plays a role in both the input and output pathways of the circadian clock: in the input component, is involved in modulating the magnitude of photic entrainment and in the output component, contributes to the regulation of a variety of liver clock-controlled genes involved in lipid metabolism. The protein is DNA-binding protein inhibitor ID-2 (ID2) of Sus scrofa (Pig).